The sequence spans 360 residues: Peptide chain release factor 1 (360 aa).

Glutamine 235 carries the post-translational modification N5-methylglutamine. Polar residues predominate over residues 285-295 (AQQASEASTRK). Residues 285–305 (AQQASEASTRKSLIGSGDRSD) are disordered.

This sequence belongs to the prokaryotic/mitochondrial release factor family. In terms of processing, methylated by PrmC. Methylation increases the termination efficiency of RF1.

It is found in the cytoplasm. Peptide chain release factor 1 directs the termination of translation in response to the peptide chain termination codons UAG and UAA. The polypeptide is Peptide chain release factor 1 (Thiobacillus denitrificans (strain ATCC 25259 / T1)).